The sequence spans 347 residues: MQIEKKDIRALSKDQLRDFFVINKDKAFRGNQVYEWLWSKGAHSFEDMTNVSKGTRQMLVENFVINHIKVDTMQRSSDGTVKNAVRLHDGLIVESVLIPTETRTTACVSSQVGCSLDCNFCATARLKRMRNLEPGEIYDQVLAIDRESKLYFNRPLSNIVFMGMGEPLMNYNNVIKAIDMITSSEGLGMSPKRITVSTSGVSKMIKKMADDEVKFKLAVSLHSAVEEIRNKIMPFTKSFPLPELREALQYWYHKTKSKITYEYVVWKGINDNKESVDALVKFCKHVPCKVNLIEYNPIDDGEFQQASPESINAYIKALEANGIIAKVRHSRGKDIDAACGQLANKEI.

Residue glutamate 94 is the Proton acceptor of the active site. The Radical SAM core domain maps to 100 to 334 (TETRTTACVS…AKVRHSRGKD (235 aa)). Cysteine 107 and cysteine 339 are joined by a disulfide. Positions 114, 118, and 121 each coordinate [4Fe-4S] cluster. Residues 165–166 (GE), serine 197, 220–222 (SLH), and asparagine 296 contribute to the S-adenosyl-L-methionine site. The active-site S-methylcysteine intermediate is the cysteine 339.

It belongs to the radical SAM superfamily. RlmN family. Requires [4Fe-4S] cluster as cofactor.

The protein resides in the cytoplasm. It catalyses the reaction adenosine(2503) in 23S rRNA + 2 reduced [2Fe-2S]-[ferredoxin] + 2 S-adenosyl-L-methionine = 2-methyladenosine(2503) in 23S rRNA + 5'-deoxyadenosine + L-methionine + 2 oxidized [2Fe-2S]-[ferredoxin] + S-adenosyl-L-homocysteine. It carries out the reaction adenosine(37) in tRNA + 2 reduced [2Fe-2S]-[ferredoxin] + 2 S-adenosyl-L-methionine = 2-methyladenosine(37) in tRNA + 5'-deoxyadenosine + L-methionine + 2 oxidized [2Fe-2S]-[ferredoxin] + S-adenosyl-L-homocysteine. Functionally, specifically methylates position 2 of adenine 2503 in 23S rRNA and position 2 of adenine 37 in tRNAs. The protein is Probable dual-specificity RNA methyltransferase RlmN of Flavobacterium psychrophilum (strain ATCC 49511 / DSM 21280 / CIP 103535 / JIP02/86).